A 62-amino-acid chain; its full sequence is Teretoxin Tsu1.1 (62 aa).

The N-terminal stretch at 1 to 21 (MSCFPVLFVMMLLASQSVWAF) is a signal peptide. Residues 22 to 40 (PEPETRIGTARDAESMGVR) constitute a propeptide that is removed on maturation.

Belongs to the teretoxin A (TA) superfamily. Contains 2 disulfide bonds. In terms of tissue distribution, expressed by the venom duct.

Its subcellular location is the secreted. The chain is Teretoxin Tsu1.1 from Terebra subulata (Chocolate spotted auger).